We begin with the raw amino-acid sequence, 155 residues long: MELKGKKAIILGDRDGIPGPALEACVRSAGAEVVFASTECFVUTSAGAMDMENQRRVKELAEKYPKEDLVVILGGAEAEASGLAAETVSNGDPAWAGPLAGVQLGLKAYHIFEPEIKEQIDPNVYEEQVSLMEMVLDVEAIVQEVRSIREKYAAW.

U43 is a catalytic residue. Position 43 (U43) is a non-standard amino acid, selenocysteine.

It belongs to the GrdA family. In terms of assembly, monomer. Component of the glycine, sarcosine and betaine reductase complexes, together with components B and C.

The catalysed reaction is acetyl phosphate + [thioredoxin]-disulfide + NH4(+) + H2O = [thioredoxin]-dithiol + glycine + phosphate + H(+). It catalyses the reaction acetyl phosphate + methylamine + [thioredoxin]-disulfide + H2O = sarcosine + [thioredoxin]-dithiol + phosphate + H(+). The enzyme catalyses acetyl phosphate + trimethylamine + [thioredoxin]-disulfide + H2O = glycine betaine + [thioredoxin]-dithiol + phosphate + H(+). In terms of biological role, in the first step of glycine, betaine and sarcosine reductases, the substrate is bound to component PB via a Schiff base intermediate. Then the PB-activated substrate is nucleophilically attacked by the selenol anion of component PA to transform it to a carboxymethylated selenoether and the respective amine. By action of component PC, acetyl phosphate is formed, leaving component PA in its oxidized state. Finally component PA becomes reduced by the thioredoxin system to start a new catalytic cycle of reductive deamination. The sequence is that of Glycine/sarcosine/betaine reductase complex component A (grdA) from Symbiobacterium thermophilum (strain DSM 24528 / JCM 14929 / IAM 14863 / T).